A 515-amino-acid polypeptide reads, in one-letter code: Envelope glycoprotein (515 aa).

Positions 1–33 (MPKERRSRRRPQPIIRWVSLTLTLLALCQPIQT) are cleaved as a signal peptide. Residues 34–436 (WRCSLSLGNQ…GLTAWVRETI (403 aa)) are Extracellular-facing. Asparagine 129 and asparagine 203 each carry an N-linked (GlcNAc...) asparagine; by host glycan. The short motif at 212–215 (CAIC) is the CXXC element. Intrachain disulfides connect cysteine 212-cysteine 215, cysteine 212-cysteine 392, and cysteine 384-cysteine 391. Residues asparagine 230, asparagine 251, asparagine 256, asparagine 271, and asparagine 287 are each glycosylated (N-linked (GlcNAc...) asparagine; by host). The interval 304 to 324 (VAALTLGLALSVGLTGINVAV) is fusion peptide. Coiled-coil stretches lie at residues 330–376 (QRLT…WLYI) and 388–420 (NEPC…DWQW). N-linked (GlcNAc...) asparagine; by host glycosylation is present at asparagine 351. The immunosuppression stretch occupies residues 365 to 381 (AQNRRGLDWLYIRLGFQ). The short motif at 384 to 392 (CPTINEPCC) is the CX6CC element. An N-linked (GlcNAc...) asparagine; by host glycan is attached at asparagine 398. A helical transmembrane segment spans residues 437-457 (HSVLSLFLLALFLLFLAPCLI). Residue cysteine 455 is the site of S-palmitoyl cysteine; by host attachment. Residues 458–515 (KCLTSRLLKLLRQAPHFPEISFPPKPDSDYQALLPSAPEIYSHLSPTKPDYINLRPCP) are Cytoplasmic-facing.

In terms of assembly, the mature envelope protein (Env) consists of a trimer of SU-TM heterodimers attached by a labile interchain disulfide bond. Post-translationally, specific enzymatic cleavages in vivo yield mature proteins. Envelope glycoproteins are synthesized as an inactive precursor that is N-glycosylated and processed likely by host cell furin or by a furin-like protease in the Golgi to yield the mature SU and TM proteins. The cleavage site between SU and TM requires the minimal sequence [KR]-X-[KR]-R. In terms of processing, the CXXC motif is highly conserved across a broad range of retroviral envelope proteins. It is thought to participate in the formation of a labile disulfide bond possibly with the CX6CC motif present in the transmembrane protein. Isomerization of the intersubunit disulfide bond to an SU intrachain disulfide bond is thought to occur upon receptor recognition in order to allow membrane fusion. The transmembrane protein is palmitoylated.

The protein localises to the virion membrane. The protein resides in the host cell membrane. In terms of biological role, the surface protein (SU) attaches the virus to the host cell by binding to its receptor. This interaction triggers the refolding of the transmembrane protein (TM) and is thought to activate its fusogenic potential by unmasking its fusion peptide. Fusion occurs at the host cell plasma membrane. The transmembrane protein (TM) acts as a class I viral fusion protein. Under the current model, the protein has at least 3 conformational states: pre-fusion native state, pre-hairpin intermediate state, and post-fusion hairpin state. During viral and target cell membrane fusion, the coiled coil regions (heptad repeats) assume a trimer-of-hairpins structure, positioning the fusion peptide in close proximity to the C-terminal region of the ectodomain. The formation of this structure appears to drive apposition and subsequent fusion of viral and target cell membranes. Membranes fusion leads to delivery of the nucleocapsid into the cytoplasm. The chain is Envelope glycoprotein (env) from Bos taurus (Bovine).